The chain runs to 1131 residues: PolyA-specific ribonuclease subunit panl-2 (1131 aa).

The region spanning 489 to 864 (VTMQSTHGMN…LPALLAYKKK (376 aa)) is the USP domain. In terms of domain architecture, Exonuclease spans 909–1074 (VGLDAEFIKI…VDARYALKLY (166 aa)). Positions 1104 to 1115 (QTSSPLVVSTTR) are enriched in polar residues. The segment at 1104 to 1131 (QTSSPLVVSTTRKTPEDTNPADAAPKSV) is disordered.

This is PolyA-specific ribonuclease subunit panl-2 from Caenorhabditis elegans.